The following is a 332-amino-acid chain: Glycerol-3-phosphate dehydrogenase [NAD(P)+] (332 aa).

Positions 11, 30, and 108 each coordinate NADPH. Lys108, Gly137, and Ser139 together coordinate sn-glycerol 3-phosphate. Residue Ala141 participates in NADPH binding. Sn-glycerol 3-phosphate contacts are provided by Lys192, Asp245, Ser255, Arg256, and Asn257. Lys192 acts as the Proton acceptor in catalysis. Arg256 serves as a coordination point for NADPH. The NADPH site is built by Val280 and Glu282.

Belongs to the NAD-dependent glycerol-3-phosphate dehydrogenase family.

Its subcellular location is the cytoplasm. It catalyses the reaction sn-glycerol 3-phosphate + NAD(+) = dihydroxyacetone phosphate + NADH + H(+). It carries out the reaction sn-glycerol 3-phosphate + NADP(+) = dihydroxyacetone phosphate + NADPH + H(+). The protein operates within membrane lipid metabolism; glycerophospholipid metabolism. In terms of biological role, catalyzes the reduction of the glycolytic intermediate dihydroxyacetone phosphate (DHAP) to sn-glycerol 3-phosphate (G3P), the key precursor for phospholipid synthesis. The protein is Glycerol-3-phosphate dehydrogenase [NAD(P)+] of Burkholderia vietnamiensis (strain G4 / LMG 22486) (Burkholderia cepacia (strain R1808)).